Here is a 156-residue protein sequence, read N- to C-terminus: Probable cyclic pyranopterin monophosphate synthase (156 aa).

Residues 73–75 and 109–110 contribute to the substrate site; these read LCH and ME. Asp124 is an active-site residue.

Belongs to the MoaC family. As to quaternary structure, homohexamer; trimer of dimers.

The catalysed reaction is (8S)-3',8-cyclo-7,8-dihydroguanosine 5'-triphosphate = cyclic pyranopterin phosphate + diphosphate. It participates in cofactor biosynthesis; molybdopterin biosynthesis. Catalyzes the conversion of (8S)-3',8-cyclo-7,8-dihydroguanosine 5'-triphosphate to cyclic pyranopterin monophosphate (cPMP). The protein is Probable cyclic pyranopterin monophosphate synthase of Pyrococcus furiosus (strain ATCC 43587 / DSM 3638 / JCM 8422 / Vc1).